The primary structure comprises 265 residues: Tryptophan synthase alpha chain (265 aa).

Active-site proton acceptor residues include glutamate 45 and aspartate 56.

It belongs to the TrpA family. As to quaternary structure, tetramer of two alpha and two beta chains.

The catalysed reaction is (1S,2R)-1-C-(indol-3-yl)glycerol 3-phosphate + L-serine = D-glyceraldehyde 3-phosphate + L-tryptophan + H2O. Its pathway is amino-acid biosynthesis; L-tryptophan biosynthesis; L-tryptophan from chorismate: step 5/5. In terms of biological role, the alpha subunit is responsible for the aldol cleavage of indoleglycerol phosphate to indole and glyceraldehyde 3-phosphate. In Halalkalibacterium halodurans (strain ATCC BAA-125 / DSM 18197 / FERM 7344 / JCM 9153 / C-125) (Bacillus halodurans), this protein is Tryptophan synthase alpha chain.